The following is a 547-amino-acid chain: G protein-coupled receptor associated sorting protein 3 (547 aa).

Basic residues-rich tracts occupy residues 1–10 (MTGTKNKTRA) and 38–48 (AKTRAKAKAKT). The interval 1–53 (MTGTKNKTRAQAKTEKKPVTQAKAGAEREATGVVRPVAKTRAKAKAKTGSKTD) is disordered.

The protein belongs to the GPRASP family. As to quaternary structure, homodimer.

Its subcellular location is the cytoplasm. It is found in the nucleus. In terms of biological role, survival and differentiation promoting protein that plays a role in the regulation of neurosynaptogenesis. Induces phosphatase PP2A activity which results in APP dephosphorylation and inhibits BACE1-mediated processing of APP. In Macaca fascicularis (Crab-eating macaque), this protein is G protein-coupled receptor associated sorting protein 3 (GPRASP3).